Reading from the N-terminus, the 141-residue chain is Hemoglobin subunit alpha (141 aa).

The Globin domain maps to 1–141 (VLSGTDKTNV…VGLVLTAKYR (141 aa)). Histidine 58 is an O2 binding site. A heme b-binding site is contributed by histidine 87.

It belongs to the globin family. In terms of assembly, heterotetramer of two alpha chains and two beta chains. In terms of tissue distribution, red blood cells.

Functionally, involved in oxygen transport from the lung to the various peripheral tissues. This Psittacula krameri (Rose-ringed parakeet) protein is Hemoglobin subunit alpha (HBA).